We begin with the raw amino-acid sequence, 239 residues long: UDP-2,3-diacylglucosamine hydrolase (239 aa).

5 residues coordinate Mn(2+): Asp8, His10, Asp41, Asn78, and His113. 78–79 provides a ligand contact to substrate; that stretch reads NR. Residues Asp121, Ser159, Asn163, Lys166, and His194 each coordinate substrate. Mn(2+) contacts are provided by His194 and His196.

Belongs to the LpxH family. It depends on Mn(2+) as a cofactor.

The protein resides in the cell inner membrane. The catalysed reaction is UDP-2-N,3-O-bis[(3R)-3-hydroxytetradecanoyl]-alpha-D-glucosamine + H2O = 2-N,3-O-bis[(3R)-3-hydroxytetradecanoyl]-alpha-D-glucosaminyl 1-phosphate + UMP + 2 H(+). It participates in glycolipid biosynthesis; lipid IV(A) biosynthesis; lipid IV(A) from (3R)-3-hydroxytetradecanoyl-[acyl-carrier-protein] and UDP-N-acetyl-alpha-D-glucosamine: step 4/6. Its function is as follows. Hydrolyzes the pyrophosphate bond of UDP-2,3-diacylglucosamine to yield 2,3-diacylglucosamine 1-phosphate (lipid X) and UMP by catalyzing the attack of water at the alpha-P atom. Involved in the biosynthesis of lipid A, a phosphorylated glycolipid that anchors the lipopolysaccharide to the outer membrane of the cell. This chain is UDP-2,3-diacylglucosamine hydrolase, found in Shewanella sp. (strain ANA-3).